A 387-amino-acid chain; its full sequence is Methylthioribose-1-phosphate isomerase (387 aa).

Asp-257 (proton donor) is an active-site residue.

Belongs to the eIF-2B alpha/beta/delta subunits family. MtnA subfamily.

The protein localises to the cytoplasm. It localises to the nucleus. The catalysed reaction is 5-(methylsulfanyl)-alpha-D-ribose 1-phosphate = 5-(methylsulfanyl)-D-ribulose 1-phosphate. It participates in amino-acid biosynthesis; L-methionine biosynthesis via salvage pathway; L-methionine from S-methyl-5-thio-alpha-D-ribose 1-phosphate: step 1/6. In terms of biological role, catalyzes the interconversion of methylthioribose-1-phosphate (MTR-1-P) into methylthioribulose-1-phosphate (MTRu-1-P). In Neosartorya fischeri (strain ATCC 1020 / DSM 3700 / CBS 544.65 / FGSC A1164 / JCM 1740 / NRRL 181 / WB 181) (Aspergillus fischerianus), this protein is Methylthioribose-1-phosphate isomerase (mri1).